The chain runs to 327 residues: Aldo-keto reductase family 1 member A1 (327 aa).

NADP(+) contacts are provided by residues 13–22 (GQKIPLIGLG), Thr23, Trp24, and Asp47. The active-site Proton donor is the Tyr52. Ser164, Asn165, Ser213, Leu215, Ser217, Lys265, Ser266, Val267, Thr268, Arg271, Gln274, and Asn275 together coordinate NADP(+).

This sequence belongs to the aldo/keto reductase family.

Its subcellular location is the cytoplasm. It localises to the cytosol. The protein resides in the apical cell membrane. It carries out the reaction a primary alcohol + NADP(+) = an aldehyde + NADPH + H(+). The catalysed reaction is S-nitroso-CoA + NADPH + H(+) = sulfinamide-CoA + NADP(+). The enzyme catalyses S-nitrosoglutathione + NADPH + H(+) = S-(hydroxysulfenamide)glutathione + NADP(+). Its function is as follows. Catalyzes the NADPH-dependent reduction of a wide variety of carbonyl-containing compounds to their corresponding alcohols. Displays enzymatic activity towards endogenous metabolites such as aromatic and aliphatic aldehydes, ketones, monosaccharides and bile acids. Acts as an aldehyde-detoxification enzyme. Also acts as an inhibitor of protein S-nitrosylation by mediating degradation of S-nitroso-coenzyme A (S-nitroso-CoA), a cofactor required to S-nitrosylate proteins. Also acts as a S-nitroso-glutathione reductase by catalyzing the NADPH-dependent reduction of S-nitrosoglutathione. Displays no reductase activity towards retinoids. In Xenopus tropicalis (Western clawed frog), this protein is Aldo-keto reductase family 1 member A1 (akr1a1).